The sequence spans 298 residues: NAD kinase (298 aa).

D80 (proton acceptor) is an active-site residue. NAD(+)-binding positions include 80–81 (DG), 154–155 (ND), R182, D184, 195–200 (TAYALS), A219, and Q253.

Belongs to the NAD kinase family. Requires a divalent metal cation as cofactor.

The protein localises to the cytoplasm. The enzyme catalyses NAD(+) + ATP = ADP + NADP(+) + H(+). In terms of biological role, involved in the regulation of the intracellular balance of NAD and NADP, and is a key enzyme in the biosynthesis of NADP. Catalyzes specifically the phosphorylation on 2'-hydroxyl of the adenosine moiety of NAD to yield NADP. The chain is NAD kinase from Delftia acidovorans (strain DSM 14801 / SPH-1).